Consider the following 28-residue polypeptide: Cycloviolin-B (28 aa).

A cross-link (cyclopeptide (Gly-Asn)) is located at residues 1–28 (GTACGESCYVLPCFTVGCTCTSSQCFKN). 3 disulfide bridges follow: cysteine 4–cysteine 18, cysteine 8–cysteine 20, and cysteine 13–cysteine 25.

Post-translationally, this is a cyclic peptide.

Its function is as follows. Probably participates in a plant defense mechanism. Has anti-HIV activity. The chain is Cycloviolin-B from Leonia cymosa (Sacha uba).